The sequence spans 122 residues: Cupin 2 conserved barrel domain-containing protein (122 aa).

A cupin 2 conserved barrel region spans residues 55-119; sequence PGGVTTAEDH…DSPVEIVSIW (65 aa). Residues Asp-63, His-65, Glu-69, and His-103 each coordinate Zn(2+).

Requires Zn(2+) as cofactor.

The catalysed reaction is N(6)-hydroxy-L-lysine + L-glutamate + ATP = 1-L-glutamo-2-N(6-)L-lysinohydrazine + AMP + diphosphate + 2 H(+). Its activity is regulated as follows. Inhibited by 1,10-phenanthroline (OP). Functionally, catalyzes hydrazine (N-N) bond formation from an unstable ester intermediate, the product of the ATP-dependent condensation of L-N(6)-OH-lysine and L-glutamine substrates by a methionyl-tRNA synthase-like protein. The sequence is that of Cupin 2 conserved barrel domain-containing protein from Rhodococcus jostii (strain RHA1).